A 330-amino-acid chain; its full sequence is Probable ADP,ATP carrier protein At5g56450 (330 aa).

Over residues 1 to 10 (MCISKEDEED) the composition is skewed to acidic residues. The segment at 1-22 (MCISKEDEEDPSRNRRNQSPLS) is disordered. A run of 6 helical transmembrane segments spans residues 27-61 (LKHFQKDLLAGAVMGGVVHTIVAPIERAKLLLQTQ), 103-127 (GSSVLRYYPSVALNFSLKDLYRSIL), 137-171 (IFSGALANFMAGSAAGCTALIVVYPLDIAHTRLAA), 203-230 (GLPASLHGVIIHRGLYFGGFDTVKEIFS), 236-270 (ELALWKRWGLAQAVTTSAGLASYPLDTVRRRIMMQ), and 300-325 (GALSNMFRSTGSAAILVFYDEVKRFL). Solcar repeat units follow at residues 28-126 (KHFQ…YRSI), 139-228 (SGAL…VKEI), and 241-324 (KRWG…VKRF). R108 and K120 together coordinate ADP. R264 contacts ADP. Positions 264 to 269 (RRRIMM) match the Substrate recognition motif.

This sequence belongs to the mitochondrial carrier (TC 2.A.29) family. As to quaternary structure, monomer.

It is found in the membrane. The catalysed reaction is ADP(in) + ATP(out) = ADP(out) + ATP(in). Functionally, ADP:ATP antiporter that catalyzes the exchange of ADP and ATP across the membrane. In Arabidopsis thaliana (Mouse-ear cress), this protein is Probable ADP,ATP carrier protein At5g56450.